Consider the following 1192-residue polypeptide: Probable phospholipid-transporting ATPase IM (1192 aa).

Topologically, residues 1 to 44 are cytoplasmic; sequence MFCSEKKLREVERIVKANDREYNEKFQYADNRIHTSKYNILTFL. A helical membrane pass occupies residues 45-66; it reads PINLFEQFQRVANAYFLCLLIL. Over 67 to 72 the chain is Exoplasmic loop; the sequence is QLIPEI. Residues 73–92 form a helical membrane-spanning segment; the sequence is SSLTWFTTIVPLVLVITMTA. Residues 93 to 276 are Cytoplasmic-facing; that stretch reads VKDATDDYFR…TSIDRLMNTL (184 aa). Residues 277–298 traverse the membrane as a helical segment; that stretch reads VLWIFGFLICLGIILAIGNSIW. The Exoplasmic loop portion of the chain corresponds to 299–327; the sequence is ESQTGDQFRTFLFWNEGEKSSVFSGFLTF. The chain crosses the membrane as a helical span at residues 328–349; it reads WSYIIILNTVVPISLYVSVEVI. Over 350-871 the chain is Cytoplasmic; that stretch reads RLGHSYFINW…GRWSYFRMCK (522 aa). The active-site 4-aspartylphosphate intermediate is the aspartate 392. Positions 392, 393, 394, 496, 537, 560, 594, 674, 675, 676, 789, and 795 each coordinate ATP. Mg(2+) is bound at residue aspartate 392. Residue threonine 394 participates in Mg(2+) binding. Aspartate 815 provides a ligand contact to Mg(2+). Asparagine 818 and aspartate 819 together coordinate ATP. Aspartate 819 is a binding site for Mg(2+). The chain crosses the membrane as a helical span at residues 872 to 892; the sequence is FLCYFFYKNFAFTLVHFWFGF. Topologically, residues 893–904 are exoplasmic loop; it reads FCGFSAQTVYDQ. A helical transmembrane segment spans residues 905–924; it reads WFITLFNIVYTSLPVLAMGI. Topologically, residues 925–954 are cytoplasmic; that stretch reads FDQDVSDQNSVDCPQLYKPGQLNLLFNKRK. Residues 955 to 976 traverse the membrane as a helical segment; that stretch reads FFICVLHGIYTSLVLFFIPYGA. The Exoplasmic loop segment spans residues 977–990; the sequence is FYNVAGEDGQHIAD. A helical membrane pass occupies residues 991–1013; the sequence is YQSFAVTMATSLVIVVSVQIALD. The Cytoplasmic segment spans residues 1014–1019; the sequence is TSYWTF. A helical membrane pass occupies residues 1020 to 1040; that stretch reads INHVFIWGSIAIYFSILFTMH. The Exoplasmic loop portion of the chain corresponds to 1041-1060; the sequence is SNGIFGIFPNQFPFVGNARH. The helical transmembrane segment at 1061-1085 threads the bilayer; that stretch reads SLTQKCIWLVILLTTVASVMPVVAF. Residues 1086-1192 are Cytoplasmic-facing; that stretch reads RFLKVDLYPT…SFSQDKTVKL (107 aa). Basic residues predominate over residues 1104–1125; the sequence is QKAQKKARPPSSRRPRTRRSSS. 2 disordered regions span residues 1104 to 1130 and 1143 to 1163; these read QKAQKKARPPSSRRPRTRRSSSRRSGY and TSGKNMRAKNPPPTSGLEKTH.

Belongs to the cation transport ATPase (P-type) (TC 3.A.3) family. Type IV subfamily. Component of a P4-ATPase flippase complex which consists of a catalytic alpha subunit and an accessory beta subunit. Interacts with beta subunits TMEM30A and TMEM30B. Mg(2+) serves as cofactor. Ubiquitously expressed at moderate levels.

Its subcellular location is the cell membrane. The protein resides in the golgi apparatus. The enzyme catalyses ATP + H2O + phospholipidSide 1 = ADP + phosphate + phospholipidSide 2.. In terms of biological role, component of a P4-ATPase flippase complex which catalyzes the hydrolysis of ATP coupled to the transport of aminophospholipids from the outer to the inner leaflet of various membranes and ensures the maintenance of asymmetric distribution of phospholipids. Phospholipid translocation also seems to be implicated in vesicle formation and in uptake of lipid signaling molecules. This chain is Probable phospholipid-transporting ATPase IM (ATP8B4), found in Homo sapiens (Human).